A 450-amino-acid polypeptide reads, in one-letter code: Phosphoglucosamine mutase (450 aa).

S102 serves as the catalytic Phosphoserine intermediate. S102, D244, D246, and D248 together coordinate Mg(2+). Residue S102 is modified to Phosphoserine.

The protein belongs to the phosphohexose mutase family. Mg(2+) serves as cofactor. Post-translationally, activated by phosphorylation.

The enzyme catalyses alpha-D-glucosamine 1-phosphate = D-glucosamine 6-phosphate. In terms of biological role, catalyzes the conversion of glucosamine-6-phosphate to glucosamine-1-phosphate. The sequence is that of Phosphoglucosamine mutase from Nitratidesulfovibrio vulgaris (strain DSM 19637 / Miyazaki F) (Desulfovibrio vulgaris).